The following is a 229-amino-acid chain: MLTSTLLALASAALASAHTVITYPGWRGNNLKDNEEFPYGMQWTYPCGGLTLTQNRTYWPTTGGAISFQPGWFQGHATAFIYVNLGIGNDGPDGGPKNMSFPMVSPFQIIGPGKNPYPGTFCLPQVSTPAGFEFKEGDNATIQLVELAIHGAALYSCVDITFVPPGDPRVAQVNESNCFNSTDLGAADLYTINILESGRDRLALTSAAASLARMAGWVPLVAGGLWLML.

A signal peptide spans 1-17 (MLTSTLLALASAALASA). Histidine 18 provides a ligand contact to Cu(2+). Cystine bridges form between cysteine 47-cysteine 157 and cysteine 122-cysteine 178. N-linked (GlcNAc...) asparagine glycans are attached at residues asparagine 55, asparagine 98, asparagine 139, asparagine 174, and asparagine 180. Serine 206 carries GPI-anchor amidated serine lipidation. Residues 207-229 (AAASLARMAGWVPLVAGGLWLML) constitute a propeptide, removed in mature form.

Belongs to the X325 family. Requires Cu(2+) as cofactor.

The protein resides in the cell membrane. In terms of biological role, lytic polysaccharide monooxygenase-like protein that has diverged to biological functions other than polysaccharide degradation since it does not perform oxidative cleavage of polysaccharides. Acts as the major cell wall sensor that regulates MAK-1-dependent hyphal anastomosis, the fusion of hyphal cells. May also act as a cell surface-bound protein that functions in the copper-accumulation pathway. This is Lytic polysaccharide monooxygenase-like protein ham-7 from Neurospora crassa (strain ATCC 24698 / 74-OR23-1A / CBS 708.71 / DSM 1257 / FGSC 987).